The primary structure comprises 202 residues: Endothelin-1 (202 aa).

Residues 1-25 (MDYFPMIFALLFVAFQGAPEAAVLG) form the signal peptide. A propeptide spanning residues 26-50 (TELSTGAESGGERPVPTTPWRPRRS) is cleaved from the precursor. Positions 29–48 (STGAESGGERPVPTTPWRPR) are disordered. 2 disulfides stabilise this stretch: C53-C67 and C55-C63. A propeptide spanning residues 74 to 202 (VNTPEHVVPY…DKKVIYSRAH (129 aa)) is cleaved from the precursor. Residues 110-124 (CQCASQTDKKCQNFC) are endothelin-like.

The protein belongs to the endothelin/sarafotoxin family.

The protein localises to the secreted. Endothelins are endothelium-derived vasoconstrictor peptides. Probable ligand for G-protein coupled receptors EDNRA and EDNRB which activates PTK2B, BCAR1, BCAR3 and, GTPases RAP1 and RHOA cascade in glomerular mesangial cells. Also binds the DEAR/FBXW7-AS1 receptor. Promotes mesenteric arterial wall remodeling via activation of ROCK signaling and subsequent colocalization of NFATC3 with F-actin filaments. NFATC3 then translocates to the nucleus where it subsequently promotes the transcription of the smooth muscle hypertrophy and differentiation marker ACTA2. The sequence is that of Endothelin-1 (EDN1) from Ovis aries (Sheep).